We begin with the raw amino-acid sequence, 105 residues long: MAEWNGEYISPYAEHGKKSEQVKKITVSIPLKVLKILTDERTRRQVNNLKHATNSELLCEAFLHAFTGQPLPNDEDLRKERNDEIPEEAKEIMRQRGVDPETWEY.

Belongs to the MetJ family. In terms of assembly, homodimer.

It localises to the cytoplasm. Its function is as follows. This regulatory protein, when combined with SAM (S-adenosylmethionine) represses the expression of the methionine regulon and of enzymes involved in SAM synthesis. The polypeptide is Met repressor (Proteus mirabilis (strain HI4320)).